Reading from the N-terminus, the 147-residue chain is Hemoglobin subunit beta (147 aa).

V2 is modified (N-acetylvaline). The Globin domain occupies 3–147 (NLSGDEKNAV…VANALAHRYH (145 aa)). S45 carries the post-translational modification Phosphoserine. K60 bears the N6-acetyllysine mark. A heme b-binding site is contributed by H64. K83 carries the N6-acetyllysine modification. H93 serves as a coordination point for heme b. Residue C94 is modified to S-nitrosocysteine.

It belongs to the globin family. In terms of assembly, heterotetramer of two alpha chains and two beta chains. Red blood cells.

Involved in oxygen transport from the lung to the various peripheral tissues. In Vicugna pacos (Alpaca), this protein is Hemoglobin subunit beta (HBB).